Consider the following 707-residue polypeptide: Protein MICRORCHIDIA 7 (707 aa).

Composition is skewed to basic and acidic residues over residues 1–11 (MDNSIHVKREI) and 575–587 (DNRD…DREG). Disordered regions lie at residues 1–22 (MDNS…AGFP) and 568–619 (EKSA…SGKD). Positions 590-613 (SIKTPTPASDKFYSSSYPNHNGDN) are enriched in polar residues. Residues 620-701 (GARLQEELRR…NKIKKMEGSK (82 aa)) adopt a coiled-coil conformation. The Nuclear localization signal motif lies at 633 to 640 (RRKALEVE).

It belongs to the MORC ATPase protein family. As to quaternary structure, homodimer and heterodimer. Component of an RNA-directed DNA methylation (RdDM) complex. Forms homomeric complexes. Mg(2+) serves as cofactor. The cofactor is Mn(2+).

It is found in the nucleus. Exhibits ATPase activity. Binds DNA/RNA in a non-specific manner and exhibits endonuclease activity. Probably involved in DNA repair. Involved in RNA-directed DNA methylation (RdDM) as a component of the RdDM machinery and required for gene silencing. May also be involved in the regulation of chromatin architecture to maintain gene silencing. Together with MORC4, acts to suppress a wide set of non-methylated protein-coding genes, especially involved in pathogen response. Positive regulators of defense against the oomycete Hyaloperonospora arabidopsidis (Hpa). The polypeptide is Protein MICRORCHIDIA 7 (Arabidopsis thaliana (Mouse-ear cress)).